We begin with the raw amino-acid sequence, 215 residues long: tRNA (guanine-N(7)-)-methyltransferase (215 aa).

Residues Glu-44, Glu-69, Asp-96, and Asp-118 each coordinate S-adenosyl-L-methionine. The active site involves Asp-118. Substrate is bound by residues Lys-122, Asp-154, and Thr-191 to Glu-194.

The protein belongs to the class I-like SAM-binding methyltransferase superfamily. TrmB family.

It catalyses the reaction guanosine(46) in tRNA + S-adenosyl-L-methionine = N(7)-methylguanosine(46) in tRNA + S-adenosyl-L-homocysteine. It participates in tRNA modification; N(7)-methylguanine-tRNA biosynthesis. Catalyzes the formation of N(7)-methylguanine at position 46 (m7G46) in tRNA. The polypeptide is tRNA (guanine-N(7)-)-methyltransferase (Exiguobacterium sp. (strain ATCC BAA-1283 / AT1b)).